The following is a 200-amino-acid chain: CASP-like protein 1D2 (200 aa).

Residues 1–26 (MASTENPDPETGKSEPIPASATTPPP) are disordered. Over 1–36 (MASTENPDPETGKSEPIPASATTPPPSAASFLDCRK) the chain is Cytoplasmic. A helical membrane pass occupies residues 37–57 (IDVIIRVLLFSATLTALIVMV). Topologically, residues 58-85 (TSDQTEKTQLPGVSSPAPVSAEFNDSPA) are extracellular. A helical membrane pass occupies residues 86–106 (FIFFVVALVVTSFYALMSTLV). Residues 107–129 (SISLLLKPEFTARVSVYLASLDM) lie on the Cytoplasmic side of the membrane. Residues 130 to 150 (VMLGILASATGTAGGVAYIAL) traverse the membrane as a helical segment. The Extracellular segment spans residues 151–171 (KGNKEVGWNKICNVYDKFCRY). Residues 172–192 (IATSLALSLFATLLLLVLSIC) traverse the membrane as a helical segment. Residues 193-200 (SALSKRTP) are Cytoplasmic-facing.

It belongs to the Casparian strip membrane proteins (CASP) family. As to quaternary structure, homodimer and heterodimers.

The protein resides in the cell membrane. This chain is CASP-like protein 1D2, found in Arabidopsis lyrata subsp. lyrata (Lyre-leaved rock-cress).